The following is a 283-amino-acid chain: Cyclin-C (283 aa).

The 99-residue stretch at asparagine 46–glutamate 144 folds into the Cyclin N-terminal domain. The interval threonine 252–serine 283 is disordered. Polar residues predominate over residues glutamate 267 to serine 283.

It belongs to the cyclin family. Cyclin C subfamily. As to quaternary structure, component of the Mediator complex. The cylin/CDK pair formed by ccnc/cdk8 also associates with the large subunit of RNA polymerase II.

Its subcellular location is the nucleus. Component of the Mediator complex, a coactivator involved in regulated gene transcription of nearly all RNA polymerase II-dependent genes. Mediator functions as a bridge to convey information from gene-specific regulatory proteins to the basal RNA polymerase II transcription machinery. Mediator is recruited to promoters by direct interactions with regulatory proteins and serves as a scaffold for the assembly of a functional preinitiation complex with RNA polymerase II and the general transcription factors. Binds to and activates cyclin-dependent kinase cdk8 that phosphorylates the CTD (C-terminal domain) of the large subunit of RNA polymerase II (RNAp II), which may inhibit the formation of a transcription initiation complex. This chain is Cyclin-C (ccnc), found in Xenopus tropicalis (Western clawed frog).